The chain runs to 239 residues: Small ribosomal subunit protein eS1 (239 aa).

A disordered region spans residues 1-24 (MAIQPPGSYPQGNKKGKAKKKSGQ).

The protein belongs to the eukaryotic ribosomal protein eS1 family. In terms of assembly, component of the small ribosomal subunit. Mature ribosomes consist of a small (40S) and a large (60S) subunit. The 40S subunit contains about 33 different proteins and 1 molecule of RNA (18S). The 60S subunit contains about 49 different proteins and 3 molecules of RNA (25S, 5.8S and 5S).

It is found in the cytoplasm. This Encephalitozoon cuniculi (strain GB-M1) (Microsporidian parasite) protein is Small ribosomal subunit protein eS1.